A 360-amino-acid chain; its full sequence is MSTTTNKKPIRVYVDGCFDLMHFGHANALRQARELGDILVVGVHTDEEIAKNKGPPVMNEQERYKAVRACKWADEVAEGAPYTLTEEYLDSLNCDFCVHGEDISVGADGKDVYEGIKKSGKFRFIKRTEGVSTTELVGRMLLCTKDHLQNVSGEQTSPLGGVNPNVLHKQSPYTSLSHFLPTTRKIVQFSEGRSPKPNDKIIYMDGGFDLFHVGHTEALKQARALGDYLIVGVHDDRVVHEQKGSNFPIMNLHERVLSVLSCRYVDEVVIGAPFSVTKDMIDSLHINVVVHGDDQVVLGPEGGVDPYKLPRELGIYKEVKHTEGLTATEIVKRIIDNRLQYEARNRKKEAKEINFIEQSN.

Residues 207–208 (GF), 215–218 (HTEA), lysine 243, 291–294 (HGDD), and 321–325 (HTEGL) contribute to the CTP site.

Belongs to the cytidylyltransferase family.

It catalyses the reaction phosphoethanolamine + CTP + H(+) = CDP-ethanolamine + diphosphate. It functions in the pathway phospholipid metabolism; phosphatidylethanolamine biosynthesis; phosphatidylethanolamine from ethanolamine: step 2/3. Its function is as follows. Ethanolamine-phosphate cytidylyltransferase that catalyzes the second step in the synthesis of phosphatidylethanolamine (PE) from ethanolamine via the CDP-ethanolamine pathway. The polypeptide is Ethanolamine-phosphate cytidylyltransferase (pctA) (Dictyostelium discoideum (Social amoeba)).